The following is a 540-amino-acid chain: MTQNSLPSWSSLQTHYDKIRDAHMRDWFAPENDPAPTRAERFAFAGGGLAADFSKNRITEETLKLLVQVAREAGVEKRRDAMFAGDIVNPTEGRAVLHTALRATDPKAPFYAQVQAERKKMAVFADQVRSGEWKGYTGKRIRYVVNIGIGGSDLGPKMVVHALHHLATPEITTHFVSNVDGADLYNVMQQIDPEETLAIIVSKTFTTLETMTNARSLRDWFIEKGCPESALAKHFVGVSANPAEVVKFGIAKENVFEMWDWVGGRYSLWSAVGLSIMIAIGPKQFDELLAGANEMDQHFRDAPLEKNLPVLLGMIGIWYRNFFGSQSYLVAPYSQALHFLPSYLQQLEMESNGKSARLDGAMVDYPTAAVTWGEPGTNGQHAFFQMLHQGPTIVPIDFIAVLTPEHPLVSHHPKLLANCFAQSEALMVGRTLEEAKKVAGADKPELAPHLVFPGNRPTTTLLVDALTARSLGALIALYEHKVLVQGTVWNINSFDQWGVELGKILGKVVEADLTAPSADVKKHDSSTSALIARARAALKK.

The active-site Proton donor is Glu-350. Residues His-381 and Lys-503 contribute to the active site.

It belongs to the GPI family.

It localises to the cytoplasm. The enzyme catalyses alpha-D-glucose 6-phosphate = beta-D-fructose 6-phosphate. The protein operates within carbohydrate biosynthesis; gluconeogenesis. It participates in carbohydrate degradation; glycolysis; D-glyceraldehyde 3-phosphate and glycerone phosphate from D-glucose: step 2/4. In terms of biological role, catalyzes the reversible isomerization of glucose-6-phosphate to fructose-6-phosphate. The chain is Glucose-6-phosphate isomerase from Paraburkholderia phytofirmans (strain DSM 17436 / LMG 22146 / PsJN) (Burkholderia phytofirmans).